A 1716-amino-acid chain; its full sequence is DNA-directed RNA polymerase I subunit RPA1 (1716 aa).

Residues cysteine 64, cysteine 67, cysteine 74, histidine 77, cysteine 104, and cysteine 107 each coordinate Zn(2+). Residues 110–201 (LTCPRAAIHL…VAHFWKTHMA (92 aa)) form a clamp region. Residues cysteine 205 and cysteine 208 each contribute to the Zn(2+) site. The clamp stretch occupies residues 327–433 (FTNGQTVNLQ…IRQILEKKEG (107 aa)). The interval 410–423 (DSDMDKLMLEKYPG) is rudder. DNA is bound by residues lysine 431, arginine 436, and arginine 443. Residues 475–549 (YPQPVTPWNV…QGAKVVCRHV (75 aa)) are involved in RRN3 binding to Pol I complex. Arginine 559 contributes to the RNA binding site. Mg(2+)-binding residues include aspartate 595, aspartate 597, and aspartate 599. Aspartate 599 lines the RNA pocket. The segment at 812 to 890 (KPNADVMRQR…NEINKACMPF (79 aa)) is funnel. The segment at 967–1008 (RPPEFFFHCMAGREGLVDTAVKTSRSGYLQRCIIKHLEGLVI) is bridging helix. Positions 1067–1162 (ADPQKVLRHF…SLSVWRPDIH (96 aa)) are mediates the interaction with TOP2A. A trigger loop region spans residues 1214-1255 (PGEAVGLLAAQSIGEPSTQMTLNTFHFAGRGEMNVTLGIPRL). DNA is bound at residue arginine 1256. Residues 1368–1493 (ASAFRSVNTR…RHSRPQGAEA (126 aa)) are disordered. Basic and acidic residues predominate over residues 1380 to 1397 (TQKDLDDTEDSGRNRREE). 2 stretches are compositionally biased toward acidic residues: residues 1398-1419 (ERDE…DADA) and 1429-1451 (EEEV…VQEE). Residues 1452-1464 (ENIKGEGAHQTHE) show a composition bias toward basic and acidic residues. Residues 1465–1477 (PDEEEGSGLEEES) show a composition bias toward acidic residues.

The protein belongs to the RNA polymerase beta' chain family. In terms of assembly, component of the RNA polymerase I (Pol I) complex consisting of 13 subunits: a ten-subunit catalytic core composed of POLR1A/RPA1, POLR1B/RPA2, POLR1C/RPAC1, POLR1D/RPAC2, POLR1H/RPA12, POLR2E/RPABC1, POLR2F/RPABC2, POLR2H/RPABC3, POLR2K/RPABC4 and POLR2L/RPABC5; a mobile stalk subunit POLR1F/RPA43 protruding from the core and additional subunits homologous to general transcription factors POLR1E/RPA49 and POLR1G/RPA34. Part of Pol I pre-initiation complex (PIC), in which Pol I core assembles with RRN3 and promoter-bound UTBF and SL1/TIF-IB complex. Interacts (via dock II domain) with TOP2A; this interaction may assist Pol I transcription initiation by releasing supercoils occurring during DNA unwinding. Interacts with CAVIN1; this interaction induces the dissociation of Pol I complex paused at rDNA terminator sequences. Interacts with MYO1C. Interacts with ERBB2. Interacts with DDX11. Interacts with RECQL5. It depends on Mg(2+) as a cofactor. Post-translationally, phosphorylated.

It is found in the nucleus. It localises to the nucleolus. Its subcellular location is the chromosome. It catalyses the reaction RNA(n) + a ribonucleoside 5'-triphosphate = RNA(n+1) + diphosphate. Its function is as follows. Catalytic core component of RNA polymerase I (Pol I), a DNA-dependent RNA polymerase which synthesizes ribosomal RNA precursors using the four ribonucleoside triphosphates as substrates. Transcribes 47S pre-rRNAs from multicopy rRNA gene clusters, giving rise to 5.8S, 18S and 28S ribosomal RNAs. Pol I-mediated transcription cycle proceeds through transcription initiation, transcription elongation and transcription termination stages. During transcription initiation, Pol I pre-initiation complex (PIC) is recruited by the selectivity factor 1 (SL1/TIF-IB) complex bound to the core promoter that precedes an rDNA repeat unit. The PIC assembly bends the promoter favoring the formation of the transcription bubble and promoter escape. Once the polymerase has escaped from the promoter it enters the elongation phase during which RNA is actively polymerized, based on complementarity with the template DNA strand. Highly processive, assembles in structures referred to as 'Miller trees' where many elongating Pol I complexes queue and transcribe the same rDNA coding regions. At terminator sequences downstream of the rDNA gene, PTRF interacts with Pol I and halts Pol I transcription leading to the release of the RNA transcript and polymerase from the DNA. Forms Pol I active center together with the second largest subunit POLR1B/RPA2. Appends one nucleotide at a time to the 3' end of the nascent RNA, with POLR1A/RPA1 contributing a Mg(2+)-coordinating DxDGD motif, and POLR1B/RPA2 participating in the coordination of a second Mg(2+) ion and providing lysine residues believed to facilitate Watson-Crick base pairing between the incoming nucleotide and the template base. Typically, Mg(2+) ions direct a 5' nucleoside triphosphate to form a phosphodiester bond with the 3' hydroxyl of the preceding nucleotide of the nascent RNA, with the elimination of pyrophosphate. Has proofreading activity: Pauses and backtracks to allow the cleavage of a missincorporated nucleotide via POLR1H/RPA12. High Pol I processivity is associated with decreased transcription fidelity. The chain is DNA-directed RNA polymerase I subunit RPA1 from Rattus norvegicus (Rat).